We begin with the raw amino-acid sequence, 279 residues long: 2-dehydro-3-deoxyphosphooctonate aldolase (279 aa).

The protein belongs to the KdsA family.

The protein resides in the cytoplasm. It catalyses the reaction D-arabinose 5-phosphate + phosphoenolpyruvate + H2O = 3-deoxy-alpha-D-manno-2-octulosonate-8-phosphate + phosphate. It participates in carbohydrate biosynthesis; 3-deoxy-D-manno-octulosonate biosynthesis; 3-deoxy-D-manno-octulosonate from D-ribulose 5-phosphate: step 2/3. It functions in the pathway bacterial outer membrane biogenesis; lipopolysaccharide biosynthesis. The polypeptide is 2-dehydro-3-deoxyphosphooctonate aldolase (Aromatoleum aromaticum (strain DSM 19018 / LMG 30748 / EbN1) (Azoarcus sp. (strain EbN1))).